Consider the following 899-residue polypeptide: Solute carrier family 12 member 9 (899 aa).

Over 1–44 (MTSESSPLLHYRLFSVSDGGLGPPDSSPIMTDAVTVGTGPTQRK) the chain is Cytoplasmic. Residues 45 to 65 (LSTFFGVVVPTVLSMFSIVVF) traverse the membrane as a helical segment. The Extracellular portion of the chain corresponds to 66–80 (MRIGFVVGHAGLLQS). The helical transmembrane segment at 81–101 (LLMLFVAYVIIWLTVLSVCAI) threads the bilayer. At 102–127 (STNGAVQGGGAYFMISRTLGPEFGGS) the chain is on the cytoplasmic side. The helical transmembrane segment at 128-148 (IGLMFYLANVFACGVYVLGLV) threads the bilayer. The Extracellular segment spans residues 149–176 (EAVLDVFGRDPSDVTDSLRSLPQGYGYS). Residues 177-197 (FLYASIILLLCMAICLVGASI) form a helical membrane-spanning segment. Over 198 to 202 (YSQAS) the chain is Cytoplasmic. Residues 203 to 223 (FFIFLLVFVVLLTILISFLAV) form a helical membrane-spanning segment. The Extracellular segment spans residues 224–266 (RPLTVSIRHGGNVTMTGVYTGINSSTLHNNLQADYSLDYTTGN). Residues Asn-235 and Asn-246 are each glycosylated (N-linked (GlcNAc...) asparagine). The chain crosses the membrane as a helical span at residues 267-287 (LMNFATVFAVMFNGCTGIMAG). Topologically, residues 288 to 304 (CNLSGELKQPSRSIPMG) are cytoplasmic. The chain crosses the membrane as a helical span at residues 305 to 325 (TIIAVIITFFVYLILFIFTAF). The Extracellular segment spans residues 326–347 (TCDRTLLREDYGFFRSINIWPP). Residues 348 to 368 (FVLIGVYATSLSASMSTLIGA) traverse the membrane as a helical segment. Topologically, residues 369–393 (SRILHALAKDDLFGVLLAPAKLVSK) are cytoplasmic. Residues 394–414 (GGNPWGAVVYTWALVQLVLLA) traverse the membrane as a helical segment. The Extracellular segment spans residues 415–419 (GKLNT). A helical membrane pass occupies residues 420–440 (IAGIVTVFYLIAYAAIDLACL). At 441-469 (ALEWASAPNFRPTFRFFSWHTCLLGILSS) the chain is on the cytoplasmic side. A helical transmembrane segment spans residues 470–490 (LVMMFLINPAYASGSIVLLLL). Topologically, residues 491–739 (LLGSIHFRSS…PLDLLRPQAS (249 aa)) are extracellular. Residues 740-760 (AYVDVCSLFLLQMACILNMAA) traverse the membrane as a helical segment. Residues 761-899 (SWRRYQLRVF…GLTPVTCTEL (139 aa)) are Cytoplasmic-facing.

Belongs to the SLC12A transporter family.

The protein resides in the cell membrane. It localises to the lysosome membrane. Seems to correspond to a subunit of a multimeric transport system and thus, additional subunits may be required for its function. May play a role in lysosomal ion flux and osmoregulation. The protein is Solute carrier family 12 member 9 (slc12a9) of Xenopus laevis (African clawed frog).